The chain runs to 880 residues: Alanine--tRNA ligase (880 aa).

4 residues coordinate Zn(2+): H566, H570, C668, and H672.

Belongs to the class-II aminoacyl-tRNA synthetase family. Requires Zn(2+) as cofactor.

It localises to the cytoplasm. It carries out the reaction tRNA(Ala) + L-alanine + ATP = L-alanyl-tRNA(Ala) + AMP + diphosphate. Functionally, catalyzes the attachment of alanine to tRNA(Ala) in a two-step reaction: alanine is first activated by ATP to form Ala-AMP and then transferred to the acceptor end of tRNA(Ala). Also edits incorrectly charged Ser-tRNA(Ala) and Gly-tRNA(Ala) via its editing domain. The polypeptide is Alanine--tRNA ligase (Nostoc punctiforme (strain ATCC 29133 / PCC 73102)).